We begin with the raw amino-acid sequence, 597 residues long: MAAACPLPRTPDLPTLHDKLQGLLSFLRGALAISSAHTVDFYTKSVWQELVDLPPESVLAALRESAVEAEPREAETGSGFTELPKIFCETSQKLLSVEAFARTAKHYSVQNLGLCTPSEQLLTALQGNKRQRVDENVKAIEFMNTKKSHEVQAMSELICSIADYCGLKQIIDVGSGKGYLSSFLSLKYGLNVYGIDSSNTNTHGAKERNRKLKKHWSLYHPHSRADANGWASERPRELKVPKGVECKGDAESVQRSRLGNPDLSATDGLPDFSGSAISVIRKQQKNVLAQPAEEENLYFEDAFSLIDFLPVDAIEPTSSQVQNTEKSGLRKERRNTASKARDSSIYSPLTSFITADSQLHDIIEDLEDCLMVGLHTCGDLAPSTLRIFTSKAEVKAVCSVGCCYHLLSEEFENQHKDRCANENWGFPMCHYLKEERWCCGRNARMSACLALQRVAVGQGLPTESLFYRAVLQNIIKDYYGISKCEQHVGKIYSKCSSFLEYVRMSLKKLGLDESKVSEEIIMDYYENYKPRMNELEAFNMLKVVLAPCIETLILLDRLCYLKEQDGVAWSALVKLFDPVQSPRCYAVIALKKQCDLG.

Over residues Glu245 to Gln254 the composition is skewed to basic and acidic residues. Disordered regions lie at residues Glu245–Ala265 and Thr317–Asp342. Positions Thr317 to Lys326 are enriched in polar residues.

Probable methyltransferase. The chain is Probable methyltransferase-like protein 25 (Mettl25) from Mus musculus (Mouse).